The chain runs to 126 residues: Aspartate 1-decarboxylase (126 aa).

The active-site Schiff-base intermediate with substrate; via pyruvic acid is the S25. S25 is subject to Pyruvic acid (Ser). Position 57 (T57) interacts with substrate. The active-site Proton donor is Y58. 73 to 75 (GGA) provides a ligand contact to substrate.

It belongs to the PanD family. In terms of assembly, heterooctamer of four alpha and four beta subunits. Pyruvate is required as a cofactor. Is synthesized initially as an inactive proenzyme, which is activated by self-cleavage at a specific serine bond to produce a beta-subunit with a hydroxyl group at its C-terminus and an alpha-subunit with a pyruvoyl group at its N-terminus.

It is found in the cytoplasm. It carries out the reaction L-aspartate + H(+) = beta-alanine + CO2. Its pathway is cofactor biosynthesis; (R)-pantothenate biosynthesis; beta-alanine from L-aspartate: step 1/1. In terms of biological role, catalyzes the pyruvoyl-dependent decarboxylation of aspartate to produce beta-alanine. The polypeptide is Aspartate 1-decarboxylase (Acinetobacter baumannii (strain AB307-0294)).